The primary structure comprises 913 residues: Probable TonB-dependent receptor HI_1217 (913 aa).

The signal sequence occupies residues 1–27; sequence MKKAIKLNLITLGLINTIGMTITQAQA. Residues 42 to 165 enclose the TBDR plug domain; that stretch reads SNDKKPFTEA…LAGSANFRTL (124 aa). Residues 176-913 enclose the TBDR beta-barrel domain; sequence PFGIILKGMT…TYILSLNYKF (738 aa). The TonB C-terminal box signature appears at 896–913; sequence LYNFARGRTYILSLNYKF.

This sequence belongs to the TonB-dependent receptor family.

It is found in the cell outer membrane. Its function is as follows. Probable receptor, TonB-dependent. The protein is Probable TonB-dependent receptor HI_1217 of Haemophilus influenzae (strain ATCC 51907 / DSM 11121 / KW20 / Rd).